We begin with the raw amino-acid sequence, 296 residues long: Isoprenyl transferase (296 aa).

The span at 1 to 11 (MATERNRRRKG) shows a compositional bias: basic residues. Residues 1–29 (MATERNRRRKGSYPQLPPAPDDYPTFPDK) are disordered. D76 is an active-site residue. D76 serves as a coordination point for Mg(2+). Substrate is bound by residues 77–80 (GNGR), W81, R89, H93, and 121–123 (STE). N124 serves as the catalytic Proton acceptor. Residues W125, R127, R244, and 250–252 (RAS) contribute to the substrate site. E263 lines the Mg(2+) pocket.

This sequence belongs to the UPP synthase family. As to quaternary structure, homodimer. Requires Mg(2+) as cofactor.

Catalyzes the condensation of isopentenyl diphosphate (IPP) with allylic pyrophosphates generating different type of terpenoids. The protein is Isoprenyl transferase of Mycolicibacterium parafortuitum (Mycobacterium parafortuitum).